The following is a 90-amino-acid chain: Small ribosomal subunit protein bS18B (90 aa).

It belongs to the bacterial ribosomal protein bS18 family. As to quaternary structure, part of the 30S ribosomal subunit. Forms a tight heterodimer with protein bS6.

Binds as a heterodimer with protein bS6 to the central domain of the 16S rRNA, where it helps stabilize the platform of the 30S subunit. The protein is Small ribosomal subunit protein bS18B of Roseiflexus sp. (strain RS-1).